A 1182-amino-acid polypeptide reads, in one-letter code: Retrotransposable element SLACS 132 kDa protein (1182 aa).

Disordered regions lie at residues 77–97 (GERS…PRER), 163–220 (DVLD…STDQ), 317–339 (RRKR…ALRL), and 418–478 (RTAR…STAP). The segment covering 163-174 (DVLDEEEQDDDL) has biased composition (acidic residues). Residues 420-446 (ARREQQQQRGKDNQEEEDRQKKEEKSL) show a composition bias toward basic and acidic residues. Residues 456–475 (SVRQGGQPSSSQPKRLNRWS) are compositionally biased toward polar residues. Positions 560 to 790 (NADVSMEVGR…TGDTGFGTAV (231 aa)) constitute a Reverse transcriptase domain.

The catalysed reaction is DNA(n) + a 2'-deoxyribonucleoside 5'-triphosphate = DNA(n+1) + diphosphate. The protein is Retrotransposable element SLACS 132 kDa protein of Trypanosoma brucei gambiense.